A 374-amino-acid chain; its full sequence is Chaperone protein DnaJ (374 aa).

Residues 3–67 (DFYQILGVSR…ETRARYDQFG (65 aa)) form the J domain. The interval 99–118 (GQSSQGGRSQRRGPQQGDDL) is disordered. The span at 103–115 (QGGRSQRRGPQQG) shows a compositional bias: low complexity. A CR-type zinc finger spans residues 132–214 (GQQREINIPH…CGGNGVKQVR (83 aa)). Cys145, Cys148, Cys162, Cys165, Cys188, Cys191, Cys202, and Cys205 together coordinate Zn(2+). CXXCXGXG motif repeat units lie at residues 145–152 (CEVCRGTG), 162–169 (CTTCGGSG), 188–195 (CPTCNGVG), and 202–209 (CTSCGGNG).

This sequence belongs to the DnaJ family. Homodimer. Zn(2+) serves as cofactor.

The protein localises to the cytoplasm. Its function is as follows. Participates actively in the response to hyperosmotic and heat shock by preventing the aggregation of stress-denatured proteins and by disaggregating proteins, also in an autonomous, DnaK-independent fashion. Unfolded proteins bind initially to DnaJ; upon interaction with the DnaJ-bound protein, DnaK hydrolyzes its bound ATP, resulting in the formation of a stable complex. GrpE releases ADP from DnaK; ATP binding to DnaK triggers the release of the substrate protein, thus completing the reaction cycle. Several rounds of ATP-dependent interactions between DnaJ, DnaK and GrpE are required for fully efficient folding. Also involved, together with DnaK and GrpE, in the DNA replication of plasmids through activation of initiation proteins. The protein is Chaperone protein DnaJ of Prochlorococcus marinus subsp. pastoris (strain CCMP1986 / NIES-2087 / MED4).